Here is a 445-residue protein sequence, read N- to C-terminus: tRNA(Ile)-lysidine synthase (445 aa).

30 to 35 (SGGLDS) is a binding site for ATP.

It belongs to the tRNA(Ile)-lysidine synthase family.

The protein localises to the cytoplasm. It catalyses the reaction cytidine(34) in tRNA(Ile2) + L-lysine + ATP = lysidine(34) in tRNA(Ile2) + AMP + diphosphate + H(+). Ligates lysine onto the cytidine present at position 34 of the AUA codon-specific tRNA(Ile) that contains the anticodon CAU, in an ATP-dependent manner. Cytidine is converted to lysidine, thus changing the amino acid specificity of the tRNA from methionine to isoleucine. The protein is tRNA(Ile)-lysidine synthase of Alkalilimnicola ehrlichii (strain ATCC BAA-1101 / DSM 17681 / MLHE-1).